Consider the following 337-residue polypeptide: Aspartate carbamoyltransferase catalytic subunit (337 aa).

Carbamoyl phosphate-binding residues include Arg59 and Thr60. Lys87 contributes to the L-aspartate binding site. Carbamoyl phosphate is bound by residues Arg109, His142, and Gln145. The L-aspartate site is built by Arg182 and Arg253. Carbamoyl phosphate-binding residues include Gly294 and Pro295.

The protein belongs to the aspartate/ornithine carbamoyltransferase superfamily. ATCase family. In terms of assembly, heterododecamer (2C3:3R2) of six catalytic PyrB chains organized as two trimers (C3), and six regulatory PyrI chains organized as three dimers (R2).

It carries out the reaction carbamoyl phosphate + L-aspartate = N-carbamoyl-L-aspartate + phosphate + H(+). It functions in the pathway pyrimidine metabolism; UMP biosynthesis via de novo pathway; (S)-dihydroorotate from bicarbonate: step 2/3. Catalyzes the condensation of carbamoyl phosphate and aspartate to form carbamoyl aspartate and inorganic phosphate, the committed step in the de novo pyrimidine nucleotide biosynthesis pathway. The protein is Aspartate carbamoyltransferase catalytic subunit of Prochlorococcus marinus (strain MIT 9211).